The following is a 205-amino-acid chain: Putative 3-methyladenine DNA glycosylase (205 aa).

It belongs to the DNA glycosylase MPG family.

This Bacillus thuringiensis (strain Al Hakam) protein is Putative 3-methyladenine DNA glycosylase.